The primary structure comprises 634 residues: MHPEVSEPPVDSVAEPSLEESAGDHGDAGPGIRKEEISETKETCAGPCTTSCPSQQQPSGDNGSEGFCTHSRDDREDRGPRMTKQFLQKLCKQHKLYVTPALNDTLYLHFKGFDRIENLEEYTGLRCLWLECNGIQRIENLQAQSELRCLFLQVNLLHKIENLEPLQKLDALNLSNNYIKTIENLSCLPVLNTLQMAHNRLETVADIEHLRECLRLCVLDLSHNALSDPEILSVLESMPCLRVLNLMGNPVTKHIPNYRRTVTVRLKHLTYLDDRPVFPKDRACAEAWARGGYAAEKEERRQWESREHKKITDSLEALAMIKRRAEERKKARDRGETPLPDSEGSIPTSPEAEEKQPMGEIQKKMELFVEESFEAKDELFPETPGGEKELHVVVVNGAVENPDLSGSLAHNQTPVVVTPEESTSPVAATDGARTEDIEAVAVEIKERLFIDDLPDLEDAEGTDVSVEDQIKETDIPRIQAISSLSDDSDPELDELSLSTSEATPTGATGALSHIFAISKGPSTAATVPFTDICKPIATTDLESQGQDCGAAASRPLIQELNDEPAEEAANQPLPPQTCASDPALAHPSEDGDSDSQLPAATLLGDGAEDEAESSVHPKEPSTRVGLEDIEFGLD.

A disordered region spans residues 1–80 (MHPEVSEPPV…SRDDREDRGP (80 aa)). Positions 22 to 42 (AGDHGDAGPGIRKEEISETKE) are enriched in basic and acidic residues. The span at 48–62 (CTTSCPSQQQPSGDN) shows a compositional bias: polar residues. The segment covering 70–80 (HSRDDREDRGP) has biased composition (basic and acidic residues). 6 LRR repeats span residues 101–123 (ALND…EEYT), 124–145 (GLRC…QAQS), 146–167 (ELRC…EPLQ), 168–189 (KLDA…SCLP), 190–211 (VLNT…EHLR), and 215–236 (RLCV…SVLE). The region spanning 249-288 (NPVTKHIPNYRRTVTVRLKHLTYLDDRPVFPKDRACAEAW) is the LRRCT domain. Basic and acidic residues predominate over residues 326-336 (EERKKARDRGE). The interval 326–358 (EERKKARDRGETPLPDSEGSIPTSPEAEEKQPM) is disordered. Residue serine 349 is modified to Phosphoserine. Threonine 462 carries the phosphothreonine modification. Phosphoserine is present on residues serine 465 and serine 488. Disordered stretches follow at residues 481–505 (ISSL…ATPT) and 559–634 (ELND…FGLD).

The protein belongs to the DNAAF1 family.

It localises to the cell projection. It is found in the cilium. Functionally, cilium-specific protein required for the stability of the ciliary architecture. Plays a role in cytoplasmic preassembly of dynein arms. Involved in regulation of microtubule-based cilia and actin-based brush border microvilli. The sequence is that of Dynein axonemal assembly factor 1 (Dnaaf1) from Mus musculus (Mouse).